Consider the following 198-residue polypeptide: MIEFVYPHTHLVAGVDEVGRGPLVGAVVTAAVILDPARPIVGLNDSKKLSEKRRLALFDEIKEKALAWSLGRAEPEEIDELNILHATMLAMQRAVAGLKIVPEYVLIDGNRCPALPMRSLAVVKGDSRVAEISAASIIAKVTRDAEMAALDLSYPQYGFAQHKGYPTAFHLEKLSEHGPTEHHRRSFGPVKRALGLVC.

Positions 10 to 198 (HLVAGVDEVG…PVKRALGLVC (189 aa)) constitute an RNase H type-2 domain. The a divalent metal cation site is built by D16, E17, and D108.

The protein belongs to the RNase HII family. Requires Mn(2+) as cofactor. It depends on Mg(2+) as a cofactor.

It localises to the cytoplasm. It catalyses the reaction Endonucleolytic cleavage to 5'-phosphomonoester.. In terms of biological role, endonuclease that specifically degrades the RNA of RNA-DNA hybrids. The chain is Ribonuclease HII from Enterobacter sp. (strain 638).